We begin with the raw amino-acid sequence, 168 residues long: Phosphopantetheine adenylyltransferase (168 aa).

Thr10 contributes to the substrate binding site. ATP contacts are provided by residues 10-11 (TF) and His18. The substrate site is built by Lys42, Leu74, and Arg88. Residues 89 to 91 (GLR), Glu99, and 124 to 130 (NSFISST) contribute to the ATP site.

It belongs to the bacterial CoaD family. In terms of assembly, homohexamer. Requires Mg(2+) as cofactor.

Its subcellular location is the cytoplasm. The enzyme catalyses (R)-4'-phosphopantetheine + ATP + H(+) = 3'-dephospho-CoA + diphosphate. It functions in the pathway cofactor biosynthesis; coenzyme A biosynthesis; CoA from (R)-pantothenate: step 4/5. Reversibly transfers an adenylyl group from ATP to 4'-phosphopantetheine, yielding dephospho-CoA (dPCoA) and pyrophosphate. The chain is Phosphopantetheine adenylyltransferase from Shewanella denitrificans (strain OS217 / ATCC BAA-1090 / DSM 15013).